The chain runs to 501 residues: Lysine--tRNA ligase (501 aa).

Glutamate 402 and glutamate 409 together coordinate Mg(2+).

The protein belongs to the class-II aminoacyl-tRNA synthetase family. Homodimer. Mg(2+) serves as cofactor.

The protein localises to the cytoplasm. The enzyme catalyses tRNA(Lys) + L-lysine + ATP = L-lysyl-tRNA(Lys) + AMP + diphosphate. The protein is Lysine--tRNA ligase (lysS) of Helicobacter pylori (strain ATCC 700392 / 26695) (Campylobacter pylori).